Reading from the N-terminus, the 345-residue chain is Hydroxymethylglutaryl-CoA synthase (345 aa).

A (3S)-3-hydroxy-3-methylglutaryl-CoA-binding site is contributed by Asp28. The Proton donor/acceptor role is filled by Glu80. Cys112 and Thr153 together coordinate (3S)-3-hydroxy-3-methylglutaryl-CoA. Cys112 functions as the Acyl-thioester intermediate in the catalytic mechanism. Arg199 is a binding site for CoA. 2 residues coordinate (3S)-3-hydroxy-3-methylglutaryl-CoA: Thr201 and His234. Residue His234 is the Proton donor/acceptor of the active site. Lys239 is a CoA binding site. Residues Arg243, Asn266, and Ser296 each contribute to the (3S)-3-hydroxy-3-methylglutaryl-CoA site.

It belongs to the thiolase-like superfamily. Archaeal HMG-CoA synthase family. In terms of assembly, interacts with acetoacetyl-CoA thiolase that catalyzes the precedent step in the pathway and with a DUF35 protein. The acetoacetyl-CoA thiolase/HMG-CoA synthase complex channels the intermediate via a fused CoA-binding site, which allows for efficient coupling of the endergonic thiolase reaction with the exergonic HMGCS reaction.

It carries out the reaction acetoacetyl-CoA + acetyl-CoA + H2O = (3S)-3-hydroxy-3-methylglutaryl-CoA + CoA + H(+). The protein operates within metabolic intermediate biosynthesis; (R)-mevalonate biosynthesis; (R)-mevalonate from acetyl-CoA: step 2/3. Functionally, catalyzes the condensation of acetyl-CoA with acetoacetyl-CoA to form 3-hydroxy-3-methylglutaryl-CoA (HMG-CoA). Functions in the mevalonate (MVA) pathway leading to isopentenyl diphosphate (IPP), a key precursor for the biosynthesis of isoprenoid compounds that are building blocks of archaeal membrane lipids. This chain is Hydroxymethylglutaryl-CoA synthase, found in Methanobrevibacter smithii (strain ATCC 35061 / DSM 861 / OCM 144 / PS).